The sequence spans 298 residues: Cytosolic Fe-S cluster assembly factor CFD1 (298 aa).

25–32 (GKGGVGKS) is a binding site for ATP. Cys215 and Cys218 together coordinate [4Fe-4S] cluster.

This sequence belongs to the Mrp/NBP35 ATP-binding proteins family. NUBP2/CFD1 subfamily. In terms of assembly, heterotetramer of 2 NBP35 and 2 CFD1 chains. [4Fe-4S] cluster is required as a cofactor.

The protein resides in the cytoplasm. Functionally, component of the cytosolic iron-sulfur (Fe/S) protein assembly (CIA) machinery. Required for maturation of extramitochondrial Fe-S proteins. The NBP35-CFD1 heterotetramer forms a Fe-S scaffold complex, mediating the de novo assembly of an Fe-S cluster and its transfer to target apoproteins. Required for biogenesis and export of both ribosomal subunits, which may reflect a role in assembly of the Fe/S clusters in RLI1, a protein which performs rRNA processing and ribosome export. The protein is Cytosolic Fe-S cluster assembly factor CFD1 of Debaryomyces hansenii (strain ATCC 36239 / CBS 767 / BCRC 21394 / JCM 1990 / NBRC 0083 / IGC 2968) (Yeast).